Consider the following 223-residue polypeptide: Trichome differentiation protein GL1 (223 aa).

2 HTH myb-type domains span residues 11–63 (NQEY…MNYL) and 64–118 (SPNV…SKKL). 2 consecutive DNA-binding regions (H-T-H motif) follow at residues 39 to 63 (WNRI…MNYL) and 91 to 114 (WSLI…NTHL).

It localises to the nucleus. In terms of biological role, regulates the production of a signal that induces hair (trichome) precursor cells on leaf primordia to differentiate. In Arabidopsis lyrata (Lyre-leaved rock-cress), this protein is Trichome differentiation protein GL1 (GL1).